The primary structure comprises 295 residues: Indole-3-glycerol phosphate synthase (295 aa).

This sequence belongs to the TrpC family.

The enzyme catalyses 1-(2-carboxyphenylamino)-1-deoxy-D-ribulose 5-phosphate + H(+) = (1S,2R)-1-C-(indol-3-yl)glycerol 3-phosphate + CO2 + H2O. It functions in the pathway amino-acid biosynthesis; L-tryptophan biosynthesis; L-tryptophan from chorismate: step 4/5. The polypeptide is Indole-3-glycerol phosphate synthase (Prochlorococcus marinus (strain MIT 9515)).